A 282-amino-acid polypeptide reads, in one-letter code: Pantothenate synthetase (282 aa).

30–37 (MGYLHAGH) serves as a coordination point for ATP. H37 acts as the Proton donor in catalysis. Q61 contributes to the (R)-pantoate binding site. Q61 is a beta-alanine binding site. Residue 147 to 150 (GKKD) coordinates ATP. Position 153 (Q153) interacts with (R)-pantoate. ATP is bound by residues V176 and 184 to 187 (MSSR).

The protein belongs to the pantothenate synthetase family. As to quaternary structure, homodimer.

Its subcellular location is the cytoplasm. It catalyses the reaction (R)-pantoate + beta-alanine + ATP = (R)-pantothenate + AMP + diphosphate + H(+). Its pathway is cofactor biosynthesis; (R)-pantothenate biosynthesis; (R)-pantothenate from (R)-pantoate and beta-alanine: step 1/1. In terms of biological role, catalyzes the condensation of pantoate with beta-alanine in an ATP-dependent reaction via a pantoyl-adenylate intermediate. The sequence is that of Pantothenate synthetase from Geotalea uraniireducens (strain Rf4) (Geobacter uraniireducens).